Consider the following 705-residue polypeptide: Elongation factor G (705 aa).

A tr-type G domain is found at 7–287 (HLTRNIGIMA…YVCAFLPSPL (281 aa)). GTP contacts are provided by residues 16 to 23 (AHIDAGKT), 84 to 88 (DTPGH), and 138 to 141 (NKMD). Positions 293 to 312 (VGTNPTTGAEEDRKPSEDEK) are disordered. Residues 302–312 (EEDRKPSEDEK) show a composition bias toward basic and acidic residues.

The protein belongs to the TRAFAC class translation factor GTPase superfamily. Classic translation factor GTPase family. EF-G/EF-2 subfamily.

Its subcellular location is the cytoplasm. Catalyzes the GTP-dependent ribosomal translocation step during translation elongation. During this step, the ribosome changes from the pre-translocational (PRE) to the post-translocational (POST) state as the newly formed A-site-bound peptidyl-tRNA and P-site-bound deacylated tRNA move to the P and E sites, respectively. Catalyzes the coordinated movement of the two tRNA molecules, the mRNA and conformational changes in the ribosome. This is Elongation factor G from Phocaeicola vulgatus (strain ATCC 8482 / DSM 1447 / JCM 5826 / CCUG 4940 / NBRC 14291 / NCTC 11154) (Bacteroides vulgatus).